A 197-amino-acid chain; its full sequence is Nucleoid occlusion factor SlmA (197 aa).

The region spanning 7 to 67 is the HTH tetR-type domain; that stretch reads ISRREHILQC…GLIEFIEDSL (61 aa). A DNA-binding region (H-T-H motif) is located at residues 30–49; that stretch reads TTAKLAAEVGVSEAALYRHF.

It belongs to the nucleoid occlusion factor SlmA family. In terms of assembly, homodimer. Interacts with FtsZ.

The protein resides in the cytoplasm. It localises to the nucleoid. In terms of biological role, required for nucleoid occlusion (NO) phenomenon, which prevents Z-ring formation and cell division over the nucleoid. Acts as a DNA-associated cell division inhibitor that binds simultaneously chromosomal DNA and FtsZ, and disrupts the assembly of FtsZ polymers. SlmA-DNA-binding sequences (SBS) are dispersed on non-Ter regions of the chromosome, preventing FtsZ polymerization at these regions. The polypeptide is Nucleoid occlusion factor SlmA (Shewanella amazonensis (strain ATCC BAA-1098 / SB2B)).